We begin with the raw amino-acid sequence, 154 residues long: Small ribosomal subunit protein bS16 (154 aa).

The tract at residues 82 to 154 (VQERAARSNP…EAAAEESTEA (73 aa)) is disordered. Residues 92–109 (KKAEPGEKAKERAEERAA) show a composition bias toward basic and acidic residues. The span at 110 to 129 (KLAAAEEAANAPAEEPAAEP) shows a compositional bias: low complexity. Acidic residues predominate over residues 142–154 (PAEEAAAEESTEA).

It belongs to the bacterial ribosomal protein bS16 family.

The sequence is that of Small ribosomal subunit protein bS16 from Rhizorhabdus wittichii (strain DSM 6014 / CCUG 31198 / JCM 15750 / NBRC 105917 / EY 4224 / RW1) (Sphingomonas wittichii).